Consider the following 716-residue polypeptide: MAKMRVYEYAKALNVSSKEILTALKNMDLEVNNHMAMLEEKAIKKLDAKYKKGGARAKSQKPAETNKNKQPQGVNQQSAGNQPNKIRDGKKNDVQNNQFNKNKKNNNNKKNKRNNNNNKNQHQQKPVKPKKELPEKITFSGTLTVGALAEELGKEPSELIKKLMLLGVMATINQELDKDTIELIASEYGVETEEVIVLEETELEKYEEPDNEEDLEIRPPVVTIMGHVDHGKTTLLDSIRKTKVVEGEAGGITQHIGAYQIEENGKKITFLDTPGHAAFTTMRARGAEVTDITILVVAADDGVMPQTVEAINHAKAAEVPIIVAVNKIDKESANPDRVMQELTEYGLVPEAWGGETIFVPLSALTGKGIDELVEMILLVSEVEELKANPNRQAKGTVIEAELDKGRGSVATLLVQTGTLHVGDPIVVGNTFGRVRAMVNDIGRRVKTAGPSTPVEITGLNDVPQAGDQFLVFKDEKTARSVGEARASKQLEEQRSDKAKLSLDDLFEQIKQGDVKDINLIVKADVQGSAEALTAALQKIEVEGVKVKIIHTGVGAITESDIILASASNAIVIGFNVRPDGNAKSTAEAENVDIRLHRIIYKVIDEIEAAMKGMLDPEYEEKVIGQVEVRQTFKVSKIGTIAGGYVTEGTITRDSGLRLIRDGVVIFEGEVDVLKRFKDDVKEVSQGYECGITIKKYNDIREGDILEAFVMQEIERT.

The segment at 50 to 136 (YKKGGARAKS…VKPKKELPEK (87 aa)) is disordered. Over residues 62–84 (PAETNKNKQPQGVNQQSAGNQPN) the composition is skewed to polar residues. Over residues 101–113 (KNKKNNNNKKNKR) the composition is skewed to basic residues. Over residues 114–126 (NNNNNKNQHQQKP) the composition is skewed to low complexity. Residues 217-386 (IRPPVVTIMG…LLVSEVEELK (170 aa)) form the tr-type G domain. Residues 226-233 (GHVDHGKT) are G1. 226–233 (GHVDHGKT) contacts GTP. The tract at residues 251-255 (GITQH) is G2. Positions 272–275 (DTPG) are G3. Residues 272–276 (DTPGH) and 326–329 (NKID) contribute to the GTP site. Residues 326 to 329 (NKID) form a G4 region. The segment at 362-364 (SAL) is G5.

It belongs to the TRAFAC class translation factor GTPase superfamily. Classic translation factor GTPase family. IF-2 subfamily.

Its subcellular location is the cytoplasm. Functionally, one of the essential components for the initiation of protein synthesis. Protects formylmethionyl-tRNA from spontaneous hydrolysis and promotes its binding to the 30S ribosomal subunits. Also involved in the hydrolysis of GTP during the formation of the 70S ribosomal complex. This chain is Translation initiation factor IF-2 (infB), found in Bacillus subtilis (strain 168).